Here is a 254-residue protein sequence, read N- to C-terminus: Kallikrein-4 (254 aa).

Residues 1–26 form the signal peptide; it reads MATAGNPWGWFLGYLILGVAGSLVSG. Positions 27–30 are excised as a propeptide; sequence SCSQ. The 222-residue stretch at 31–252 folds into the Peptidase S1 domain; the sequence is IINGEDCSPH…FTEWIEKTVQ (222 aa). Intrachain disulfides connect C37–C167, C56–C72, C141–C241, C148–C213, C178–C192, and C203–C228. H40 is a binding site for Zn(2+). The active-site Charge relay system is the H71. E91 provides a ligand contact to Zn(2+). The Charge relay system role is filled by D116. N-linked (GlcNAc...) asparagine glycosylation is present at N169. The Charge relay system role is filled by S207.

This sequence belongs to the peptidase S1 family. Kallikrein subfamily. N-glycosylated. The N-glycan structures are of complex diantennary or triantennary type, which may be further modified with up to 2 sialic acid residues. In terms of tissue distribution, expressed in prostate.

Its subcellular location is the secreted. Its function is as follows. Has a major role in enamel formation. Required during the maturation stage of tooth development for clearance of enamel proteins and normal structural patterning of the crystalline matrix. This Homo sapiens (Human) protein is Kallikrein-4 (KLK4).